A 490-amino-acid chain; its full sequence is 4-hydroxybutyryl-CoA dehydratase/vinylacetyl-CoA-Delta-isomerase (490 aa).

Cys99 and Cys103 together coordinate [4Fe-4S] cluster. FAD is bound by residues 149–156 (MTDPKGDR) and 188–190 (HQT). [4Fe-4S] cluster is bound by residues His292 and Cys299. Residues His325 and 386-390 (DIAGG) each bind FAD.

In terms of assembly, homotetramer. FAD is required as a cofactor. Requires [4Fe-4S] cluster as cofactor.

It catalyses the reaction 4-hydroxybutanoyl-CoA = (2E)-butenoyl-CoA + H2O. The enzyme catalyses vinylacetyl-CoA = (2E)-butenoyl-CoA. Its function is as follows. Catalyzes the reversible conversion of 4-hydroxybutyryl-CoA to crotonyl-CoA. The mechanism of the reaction seems to go through three steps: (1) the FAD-dependent oxidation of 4-hydroxybutyryl-CoA to 4-hydroxycrotonyl-CoA; (2) the hydroxyl group is substituted by a hydride derived from the now reduced FAD in an SN2' reaction leading to vinylacetyl-CoA; (3) isomerization to yield crotonyl-CoA. This chain is 4-hydroxybutyryl-CoA dehydratase/vinylacetyl-CoA-Delta-isomerase (abfD), found in Clostridium aminobutyricum.